Here is a 484-residue protein sequence, read N- to C-terminus: Cysteine--tRNA ligase (484 aa).

A Zn(2+)-binding site is contributed by Cys29. The short motif at 31–41 (ATVQGMPHVGH) is the 'HIGH' region element. Zn(2+)-binding residues include Cys227, His252, and Glu256. A 'KMSKS' region motif is present at residues 283–287 (KMSKS). Lys286 is a binding site for ATP.

It belongs to the class-I aminoacyl-tRNA synthetase family. In terms of assembly, monomer. Zn(2+) is required as a cofactor.

It is found in the cytoplasm. The enzyme catalyses tRNA(Cys) + L-cysteine + ATP = L-cysteinyl-tRNA(Cys) + AMP + diphosphate. The chain is Cysteine--tRNA ligase from Paenarthrobacter aurescens (strain TC1).